A 313-amino-acid chain; its full sequence is Ribosomal RNA small subunit methyltransferase H (313 aa).

Residues 35–37 (GGH), Asp-55, Phe-79, Asp-101, and Gln-108 each bind S-adenosyl-L-methionine.

This sequence belongs to the methyltransferase superfamily. RsmH family.

It is found in the cytoplasm. The catalysed reaction is cytidine(1402) in 16S rRNA + S-adenosyl-L-methionine = N(4)-methylcytidine(1402) in 16S rRNA + S-adenosyl-L-homocysteine + H(+). Its function is as follows. Specifically methylates the N4 position of cytidine in position 1402 (C1402) of 16S rRNA. This chain is Ribosomal RNA small subunit methyltransferase H, found in Erwinia tasmaniensis (strain DSM 17950 / CFBP 7177 / CIP 109463 / NCPPB 4357 / Et1/99).